Here is a 128-residue protein sequence, read N- to C-terminus: Cyclic ether formation enzyme gkaZ (128 aa).

Positions 1 to 36 are cleaved as a signal peptide; it reads MTTARALSDGLAYLLACFNAFCIQAHLTSRFSPAFS. Transmembrane regions (helical) follow at residues 61–81 and 107–127; these read LRYM…LPGW and WLLH…AIYV.

The protein belongs to the cyclic ether formation enzyme xenC family.

The protein resides in the membrane. Its pathway is mycotoxin biosynthesis. In terms of biological role, cyclic ether formation enzyme; part of the gene cluster that mediates the biosynthesis of GKK1032, fungal natural products containing a macrocyclic para-cyclophane connected to a decahydrofluorene ring system that show potent antitumor activities. Within the pathway, gkaZ functions synergistically with gkaB and gkaX to form the cyclophane. The pathway begins with the PKS-NRPS gkaA which, with the help of the trans-enoyl reductase gkaC, synthesizes the polyketide-tyrosyl acyl thioester product which can be reductively off-loaded by the terminal reductase (R) domain in gkaA. The alpha/beta hydrolase gkaG is then required to catalyze the subsequent Knoevenagel condensation that affords the 3-pyrrolin-2-one ring, whereas the three proteins gkaB, gkaX and gkaZ then function synergistically to form the cyclophane. The polypeptide is Cyclic ether formation enzyme gkaZ (Penicillium citrinum).